The sequence spans 61 residues: Small ribosomal subunit protein uS14 (61 aa).

Positions 24, 27, 40, and 43 each coordinate Zn(2+).

The protein belongs to the universal ribosomal protein uS14 family. Zinc-binding uS14 subfamily. In terms of assembly, part of the 30S ribosomal subunit. Contacts proteins S3 and S10. It depends on Zn(2+) as a cofactor.

Binds 16S rRNA, required for the assembly of 30S particles and may also be responsible for determining the conformation of the 16S rRNA at the A site. The sequence is that of Small ribosomal subunit protein uS14 from Alkaliphilus oremlandii (strain OhILAs) (Clostridium oremlandii (strain OhILAs)).